The following is a 113-amino-acid chain: AFKGILSNADIKAAEAACFKEGSFDEDGFYAKVGLDAFSADELKKLFKIADEDKEGFIEEDELKLFLIAFAADLRALTDAETKAFLKAGDSDGDGKIGVDEFGALVDKWGAKG.

Residue A1 is modified to N-acetylalanine. C18 carries S-linked (Glc) cysteine glycosylation. 2 consecutive EF-hand domains span residues 38–73 (FSAD…FAAD) and 77–112 (LTDA…WGAK). Positions 51, 53, 55, 57, 59, 62, 90, 92, 94, 96, and 101 each coordinate Ca(2+).

This sequence belongs to the parvalbumin family. In terms of tissue distribution, muscle (at protein level).

Functionally, in muscle, parvalbumin is thought to be involved in relaxation after contraction. It binds two calcium ions. This is Parvalbumin beta from Gadus morhua subsp. callarias (Baltic cod).